We begin with the raw amino-acid sequence, 409 residues long: Inactive serine protease 35 (409 aa).

Positions 1 to 17 are cleaved as a signal peptide; the sequence is MLLWLIFFTPGWTLIDG. Asn-87 and Asn-107 each carry an N-linked (GlcNAc...) asparagine glycan. Residues 120–404 enclose the Peptidase S1 domain; that stretch reads VYGTDSRFSI…ICLWIHGNDA (285 aa). Cysteines 150 and 166 form a disulfide. Positions 188-203 are enriched in basic residues; sequence RNKSGGKKRRGSKRSR. The segment at 188–246 is disordered; that stretch reads RNKSGGKKRRGSKRSRRETSGGDQREGPREHLQDRVKAGRRRKQSGGGQRVSEGRPSFR. Residues 204-224 are compositionally biased toward basic and acidic residues; the sequence is RETSGGDQREGPREHLQDRVK.

The protein belongs to the peptidase S1 family.

The protein localises to the secreted. The chain is Inactive serine protease 35 (PRSS35) from Macaca mulatta (Rhesus macaque).